The following is a 23-amino-acid chain: Hemocyanin subunit 1 (23 aa).

The tract at residues 1-23 (DSPGGASDTQKQHXVNSXXXKXY) is disordered.

Belongs to the tyrosinase family. Hemocyanin subfamily. As to expression, hemolymph.

Its subcellular location is the secreted. It localises to the extracellular space. Its function is as follows. Hemocyanins are copper-containing oxygen carriers occurring freely dissolved in the hemolymph of many mollusks and arthropods. This is Hemocyanin subunit 1 from Cancer pagurus (Rock crab).